Consider the following 145-residue polypeptide: NDVITVQTPAFAESVTEGDVRVEGGTPLFTLRHNLKLGFMSAFVKASAFALQEQPVVNAVIDDATKEVVYRDYIDISVAVATPRGLVVPVIRNVETMNYADIERVEVRPMMYVALTYDHRLIDGREAVTFLRAAVEDPRVLLLDL.

The 28-residue stretch at 4-31 (ITVQTPAFAESVTEGDVRVEGGTPLFTL) folds into the Lipoyl-binding domain. A Phosphoserine modification is found at serine 14. N6-acetyllysine is present on residues lysine 36 and lysine 66. Residues histidine 119 and aspartate 123 contribute to the active site.

This sequence belongs to the 2-oxoacid dehydrogenase family. In terms of assembly, the 2-oxoglutarate dehydrogenase complex is composed of OGDH (2-oxoglutarate dehydrogenase; E1), DLST (dihydrolipoamide succinyltransferase; E2), DLD (dihydrolipoamide dehydrogenase; E3) and the assembly factor KGD4. It contains multiple copies of the three enzymatic components (E1, E2 and E3). In the nucleus, the 2-oxoglutarate dehydrogenase complex associates with KAT2A. Interacts with ABHD11; this interaction maintains the functional lipoylation of the 2-oxoglutarate dehydrogenase complex. (R)-lipoate serves as cofactor.

Its subcellular location is the mitochondrion matrix. The protein localises to the nucleus. It carries out the reaction N(6)-[(R)-dihydrolipoyl]-L-lysyl-[protein] + succinyl-CoA = N(6)-[(R)-S(8)-succinyldihydrolipoyl]-L-lysyl-[protein] + CoA. It participates in amino-acid degradation; L-lysine degradation via saccharopine pathway; glutaryl-CoA from L-lysine: step 6/6. The protein operates within carbohydrate metabolism; tricarboxylic acid cycle. Its function is as follows. Dihydrolipoamide succinyltransferase (E2) component of the 2-oxoglutarate dehydrogenase complex. The 2-oxoglutarate dehydrogenase complex catalyzes the overall conversion of 2-oxoglutarate to succinyl-CoA and CO(2). The 2-oxoglutarate dehydrogenase complex is mainly active in the mitochondrion. A fraction of the 2-oxoglutarate dehydrogenase complex also localizes in the nucleus and is required for lysine succinylation of histones: associates with KAT2A on chromatin and provides succinyl-CoA to histone succinyltransferase KAT2A. This Mesocricetus auratus (Golden hamster) protein is Dihydrolipoyllysine-residue succinyltransferase component of 2-oxoglutarate dehydrogenase complex, mitochondrial.